The following is a 273-amino-acid chain: 4-hydroxy-tetrahydrodipicolinate reductase (273 aa).

NAD(+) contacts are provided by residues glycine 12–methionine 17 and glutamate 38. An NADP(+)-binding site is contributed by arginine 39. NAD(+) is bound by residues glycine 102–threonine 104 and alanine 126–phenylalanine 129. Histidine 159 (proton donor/acceptor) is an active-site residue. Histidine 160 contacts (S)-2,3,4,5-tetrahydrodipicolinate. Lysine 163 serves as the catalytic Proton donor. Glycine 169–threonine 170 is a binding site for (S)-2,3,4,5-tetrahydrodipicolinate.

This sequence belongs to the DapB family. Homotetramer.

Its subcellular location is the cytoplasm. The catalysed reaction is (S)-2,3,4,5-tetrahydrodipicolinate + NAD(+) + H2O = (2S,4S)-4-hydroxy-2,3,4,5-tetrahydrodipicolinate + NADH + H(+). It carries out the reaction (S)-2,3,4,5-tetrahydrodipicolinate + NADP(+) + H2O = (2S,4S)-4-hydroxy-2,3,4,5-tetrahydrodipicolinate + NADPH + H(+). The protein operates within amino-acid biosynthesis; L-lysine biosynthesis via DAP pathway; (S)-tetrahydrodipicolinate from L-aspartate: step 4/4. In terms of biological role, catalyzes the conversion of 4-hydroxy-tetrahydrodipicolinate (HTPA) to tetrahydrodipicolinate. The chain is 4-hydroxy-tetrahydrodipicolinate reductase from Shigella flexneri.